Here is a 286-residue protein sequence, read N- to C-terminus: ATP synthase gamma chain (286 aa).

The protein belongs to the ATPase gamma chain family. In terms of assembly, F-type ATPases have 2 components, CF(1) - the catalytic core - and CF(0) - the membrane proton channel. CF(1) has five subunits: alpha(3), beta(3), gamma(1), delta(1), epsilon(1). CF(0) has three main subunits: a, b and c.

Its subcellular location is the cell inner membrane. Produces ATP from ADP in the presence of a proton gradient across the membrane. The gamma chain is believed to be important in regulating ATPase activity and the flow of protons through the CF(0) complex. In Pseudomonas syringae pv. tomato (strain ATCC BAA-871 / DC3000), this protein is ATP synthase gamma chain.